Reading from the N-terminus, the 325-residue chain is Melanocortin receptor 5 (325 aa).

Over 1–37 the chain is Extracellular; that stretch reads MNSSFHLHFLDLGLNATEGNLSGLSVRNASSPCEDMG. N-linked (GlcNAc...) asparagine glycans are attached at residues asparagine 2, asparagine 15, asparagine 20, and asparagine 28. The chain crosses the membrane as a helical span at residues 38 to 61; that stretch reads IAVEVFLALGLISLLENILVIGAI. The Cytoplasmic portion of the chain corresponds to 62–73; that stretch reads VRNRNLHIPMYF. The chain crosses the membrane as a helical span at residues 74–97; the sequence is FVGSLAVADMLVSLSNFWETITIY. At 98 to 114 the chain is on the extracellular side; it reads LLTNKHLVMADASVRHL. Residues 115–138 traverse the membrane as a helical segment; sequence DNVFDSMICISVVASMCSLLAIAV. Residues 139 to 155 are Cytoplasmic-facing; sequence DRYVTIFCRLRYQRIMT. The helical transmembrane segment at 156 to 179 threads the bilayer; that stretch reads GRRSGAIIAGIWAFCTSCGTVFIV. Residues 180 to 186 lie on the Extracellular side of the membrane; that stretch reads YYESTYV. The helical transmembrane segment at 187-211 threads the bilayer; that stretch reads VVCLIAMFLTMLLLMASLYTHMFLL. Over 212–239 the chain is Cytoplasmic; that stretch reads ARTHVRRIAALPGHSSVRQRTGVKGAIT. The helical transmembrane segment at 240–265 threads the bilayer; sequence LAMLLGVFIICWAPFFLHLILMISCP. At 266–273 the chain is on the extracellular side; the sequence is QNLYCSCF. Residues 274-297 form a helical membrane-spanning segment; sequence MSHFNMYLILIMCNSVIDPLIYAF. Residues 298 to 325 lie on the Cytoplasmic side of the membrane; that stretch reads RSQEMRKTFKEIVCFQGFRTPCRFPSTY. The S-palmitoyl cysteine moiety is linked to residue cysteine 311.

Belongs to the G-protein coupled receptor 1 family.

The protein localises to the cell membrane. Functionally, receptor for MSH (alpha, beta and gamma) and ACTH. The activity of this receptor is mediated by G proteins which activate adenylate cyclase. This receptor is a possible mediator of the immunomodulation properties of melanocortins. The chain is Melanocortin receptor 5 (MC5R) from Ovis aries (Sheep).